Reading from the N-terminus, the 1493-residue chain is MAAAAGDRASSSGFPGAAAASPEAGGGGGGGGALQGSGAPAAGAAGLLREPGSAGRERADWRRRQLRKVRSVELDQLPEQPLFLAAASPPCPSTSPSPEPADAAAGASRFQPAAGPPPPGAASRCGSHSAELAAARDSGARSPAGAEPPSAAAPSGREMENKETLKGLHKMEDRPEERMIREKLKATCMPAWKHEWLERRNRRGPVVVKPIPIKGDGSEVNNLAAEPQGEGQAGSAAPAPKGRRSPSPGSSPSGRSVKPESPGVRRKRVSPVPFQSGRITPPRRAPSPDGFSPYSPEETSRRVNKVMRARLYLLQQIGPNSFLIGGDSPDNKYRVFIGPQNCSCGRGAFCIHLLFVMLRVFQLEPSDPMLWRKTLKNFEVESLFQKYHSRRSSRIKAPSRNTIQKFVSRMSNSHTLSSSSTSTSSSENSIKDEEEQMCPICLLGMLDEESLTVCEDGCRNKLHHHCMSIWAEECRRNREPLICPLCRSKWRSHDFYSHELSSPVESPASLRAVQQPSSPQQPVAGSQRRNQESSFNLTHFGTQQIPSAYKDLAEPWIQVFGMELVGCLFSRNWNVREMALRRLSHDVSGALLLANGESTGNSGGGSGGSLSAGAASGSSQPSISGDVVEACCSVLSIVCADPVYKVYVAALKTLRAMLVYTPCHSLAERIKLQRLLRPVVDTILVKCADANSRTSQLSISTVLELCKGQAGELAVGREILKAGSIGVGGVDYVLSCILGNQAESNNWQELLGRLCLIDRLLLEFPAEFYPHIVSTDVSQAEPVEIRYKKLLSLLTFALQSIDNSHSMVGKLSRRIYLSSARMVTAVPAVFSKLVTMLNASGSTHFTRMRRRLMAIADEVEIAEVIQLGVEDTVDGHQDSLQAVAPTSCLENSSLEHTVHREKTGKGLSATRLSASSEDISDRLAGVSVGLPSSTTTEQPKPAVQTKGRPHSQCLNSSPLSHAQLMFPAPSAPCSSAPSVPDISKHRPQAFVPCKIPSASPQTQRKFSLQFQRNCSEHRDSDQLSPVFTQSRPPPSSNIHRPKPSRPVPGSTSKLGDATKSSMTLDLGSASRCDDSFGGGGNSGNAVIPSDETVFTPVEDKCRLDVNTELNSSIEDLLEASMPSSDTTVTFKSEVAVLSPEKAENDDTYKDDVNHNQKCKEKMEAEEEEALAIAMAMSASQDALPIVPQLQVENGEDIIIIQQDTPETLPGHTKAKQPYREDAEWLKGQQIGLGAFSSCYQAQDVGTGTLMAVKQVTYVRNTSSEQEEVVEALREEIRMMGHLNHPNIIRMLGATCEKSNYNLFIEWMAGGSVAHLLSKYGAFKESVVINYTEQLLRGLSYLHENQIIHRDVKGANLLIDSTGQRLRIADFGAAARLASKGTGAGEFQGQLLGTIAFMAPEVLRGQQYGRSCDVWSVGCAIIEMACAKPPWNAEKHSNHLALIFKIASATTAPSIPSHLSPGLRDVAVRCLELQPQDRPPSRELLKHPVFRTTW.

Low complexity predominate over residues 1 to 23 (MAAAAGDRASSSGFPGAAAASPE). 2 disordered regions span residues 1–178 (MAAA…PEER) and 194–300 (HEWL…EETS). Ala-2 is modified (N-acetylalanine). Ser-21 carries the phosphoserine modification. A compositionally biased stretch (gly residues) spans 24-35 (AGGGGGGGGALQ). The segment covering 36 to 46 (GSGAPAAGAAG) has biased composition (low complexity). Positions 89-99 (PPCPSTSPSPE) are enriched in pro residues. A compositionally biased stretch (low complexity) spans 140–156 (ARSPAGAEPPSAAAPSG). Phosphoserine is present on Ser-142. Positions 157 to 178 (REMENKETLKGLHKMEDRPEER) are enriched in basic and acidic residues. Positions 235-256 (SAAPAPKGRRSPSPGSSPSGRS) are enriched in low complexity. The residue at position 270 (Ser-270) is a Phosphoserine. Thr-280 carries the phosphothreonine modification. Phosphoserine is present on residues Ser-287, Ser-292, and Ser-295. The SWIM-type zinc finger occupies 333-361 (YRVFIGPQNCSCGRGAFCIHLLFVMLRVF). The segment covering 411–428 (SNSHTLSSSSTSTSSSEN) has biased composition (low complexity). The interval 411 to 431 (SNSHTLSSSSTSTSSSENSIK) is disordered. Residues 438–487 (CPICLLGMLDEESLTVCEDGCRNKLHHHCMSIWAEECRRNREPLICPLCR) form an RING-type zinc finger. Residues Ser-502 and Ser-526 each carry the phosphoserine modification. Disordered regions lie at residues 506–531 (SPAS…RRNQ) and 895–914 (EHTV…RLSA). A compositionally biased stretch (low complexity) spans 512–527 (AVQQPSSPQQPVAGSQ). Residue Ser-915 is modified to Phosphoserine. 2 disordered regions span residues 927-957 (SVGL…LNSS) and 992-1066 (PCKI…TLDL). The segment covering 998–1013 (ASPQTQRKFSLQFQRN) has biased composition (polar residues). A phosphoserine mark is found at Ser-999 and Ser-1024. Positions 1049-1063 (GSTSKLGDATKSSMT) are enriched in polar residues. The region spanning 1224 to 1489 (WLKGQQIGLG…SRELLKHPVF (266 aa)) is the Protein kinase domain. Residues 1230–1238 (IGLGAFSSC) and Lys-1253 each bind ATP. Asp-1350 functions as the Proton acceptor in the catalytic mechanism. Phosphothreonine; by autocatalysis is present on residues Thr-1381 and Thr-1393.

This sequence belongs to the protein kinase superfamily. STE Ser/Thr protein kinase family. MAP kinase kinase kinase subfamily. In terms of assembly, binds both upstream activators and downstream substrates in multimolecular complexes through its N-terminus. Oligomerizes after binding MAP4K2 or TRAF2. Interacts with AXIN1. Interacts (via the kinase catalytic domain) with STK38. Interacts with GRIPAP1. Mg(2+) is required as a cofactor. Post-translationally, autophosphorylated. In terms of tissue distribution, highly expressed in the heart and spleen while a lower level expression is seen in the liver.

The enzyme catalyses L-seryl-[protein] + ATP = O-phospho-L-seryl-[protein] + ADP + H(+). It catalyses the reaction L-threonyl-[protein] + ATP = O-phospho-L-threonyl-[protein] + ADP + H(+). Activated by autophosphorylation on Thr-1381 and Thr-1393 following oligomerization. In terms of biological role, component of a protein kinase signal transduction cascade. Activates the ERK and JNK kinase pathways by phosphorylation of MAP2K1 and MAP2K4. May phosphorylate the MAPK8/JNK1 kinase. Activates CHUK and IKBKB, the central protein kinases of the NF-kappa-B pathway. The polypeptide is Mitogen-activated protein kinase kinase kinase 1 (Map3k1) (Mus musculus (Mouse)).